A 21-amino-acid chain; its full sequence is Short neurotoxin E1 (21 aa).

Residues Met-1 to Gln-21 are disordered.

In terms of processing, contains 4 disulfide bonds. Expressed by the venom gland.

The protein resides in the secreted. Functionally, binds to muscle nicotinic acetylcholine receptor (nAChR) and inhibit acetylcholine from binding to the receptor, thereby impairing neuromuscular transmission. This chain is Short neurotoxin E1, found in Micrurus pyrrhocryptus (Coral snake).